A 221-amino-acid polypeptide reads, in one-letter code: Thymidylate kinase (221 aa).

10–17 contributes to the ATP binding site; that stretch reads GIDGAGKT.

This sequence belongs to the thymidylate kinase family.

The enzyme catalyses dTMP + ATP = dTDP + ADP. Phosphorylation of dTMP to form dTDP in both de novo and salvage pathways of dTTP synthesis. This is Thymidylate kinase from Desulforudis audaxviator (strain MP104C).